Consider the following 562-residue polypeptide: Glutamate--tRNA ligase (562 aa).

Residues 90 to 100 (PNPSGLLHIGH) carry the 'HIGH' region motif.

The protein belongs to the class-I aminoacyl-tRNA synthetase family. Glutamate--tRNA ligase type 2 subfamily.

The protein resides in the cytoplasm. The catalysed reaction is tRNA(Glu) + L-glutamate + ATP = L-glutamyl-tRNA(Glu) + AMP + diphosphate. Functionally, catalyzes the attachment of glutamate to tRNA(Glu) in a two-step reaction: glutamate is first activated by ATP to form Glu-AMP and then transferred to the acceptor end of tRNA(Glu). This Nanoarchaeum equitans (strain Kin4-M) protein is Glutamate--tRNA ligase.